A 427-amino-acid polypeptide reads, in one-letter code: uncharacterized protein (427 aa).

The next 3 membrane-spanning stretches (helical) occupy residues 10-30 (LAYL…AGFW), 43-63 (KIIS…SKLA), and 71-91 (IFEI…SFIS). T199 bears the Phosphothreonine mark. S234 carries the post-translational modification Phosphoserine. The next 5 membrane-spanning stretches (helical) occupy residues 253-273 (NLNP…IGPL), 288-308 (FAEA…VVLG), 327-347 (LLIG…LPII), 358-378 (ILDD…PPAI), and 397-417 (ILFW…VSGA).

It belongs to the auxin efflux carrier (TC 2.A.69) family.

It is found in the membrane. This is an uncharacterized protein from Saccharomyces cerevisiae (strain ATCC 204508 / S288c) (Baker's yeast).